The chain runs to 367 residues: Transcription factor aptf-2 (367 aa).

Positions 29 to 49 (VPATKETGPSSSAECSTQPAV) are disordered. Residues 36–47 (GPSSSAECSTQP) are compositionally biased toward polar residues. Residues 220 to 354 (AKQKAFPNKV…GVASELRRLT (135 aa)) are H-S-H (helix-span-helix), dimerization.

This sequence belongs to the AP-2 family. As to quaternary structure, binds DNA as a dimer.

The protein localises to the nucleus. The protein resides in the cytoplasm. Functionally, sequence-specific DNA-binding protein that interacts with enhancer elements to regulate transcription of selected genes. Required for neuroblast and epidermal morphogenesis, perhaps acting in cooperation with transcription factor aptf-4. The sequence is that of Transcription factor aptf-2 from Caenorhabditis elegans.